A 429-amino-acid polypeptide reads, in one-letter code: MFVDQVKIYVKAGNGGDGMVAFRREKFVPNGGPAGGDGGKGADVVFVVDEGLRTLVDFRFKRIFKAEHGEHGMSKSMHGRGAEDLVVKVPQGTIVKDIDTGEIIADLVAHGQRAVIAKAGRGGRGNKRFATPANPAPELSENGEPGQERNVQLELKVLADVGLVGFPSVGKSTLLSVVSAARPKIAAYHFTTIVPNLGMVDAGDGRSFVMADLPGLIEGASQGVGLGHQFLRHIERTRVIVHVIDMSGSEGRVPYEDYMAINNELEQYNLRLMERPQIIVANKMDMPEAEENLKEFKTKIAEDIPVFPISAVTKTGLRELLLAIADKLETTPEFPLNEILEQEDEDTVLYKYIAEEPDFEITREPDGTFVLSGTKIERLFTMTNFERDASISRFARQLRAMGVDEALRKRGAKDGDIVRLLDYEFEFMD.

Residues 1–158 (MFVDQVKIYV…RNVQLELKVL (158 aa)) form the Obg domain. Residues 124-145 (RGNKRFATPANPAPELSENGEP) form a disordered region. The OBG-type G domain occupies 159 to 329 (ADVGLVGFPS…LLLAIADKLE (171 aa)). Residues 165–172 (GFPSVGKS), 190–194 (FTTIV), 212–215 (DLPG), 282–285 (NKMD), and 310–312 (SAV) contribute to the GTP site. The Mg(2+) site is built by S172 and T192. Positions 351 to 429 (KYIAEEPDFE…LLDYEFEFMD (79 aa)) constitute an OCT domain.

Belongs to the TRAFAC class OBG-HflX-like GTPase superfamily. OBG GTPase family. In terms of assembly, monomer. Mg(2+) serves as cofactor.

The protein localises to the cytoplasm. Its function is as follows. An essential GTPase which binds GTP, GDP and possibly (p)ppGpp with moderate affinity, with high nucleotide exchange rates and a fairly low GTP hydrolysis rate. Plays a role in control of the cell cycle, stress response, ribosome biogenesis and in those bacteria that undergo differentiation, in morphogenesis control. The protein is GTPase Obg of Listeria welshimeri serovar 6b (strain ATCC 35897 / DSM 20650 / CCUG 15529 / CIP 8149 / NCTC 11857 / SLCC 5334 / V8).